The chain runs to 467 residues: Phosphoglucosamine mutase (467 aa).

Residue Ser-120 is the Phosphoserine intermediate of the active site. Mg(2+) contacts are provided by Ser-120, Asp-261, Asp-263, and Asp-265. Residue Ser-120 is modified to Phosphoserine.

This sequence belongs to the phosphohexose mutase family. Mg(2+) is required as a cofactor. Activated by phosphorylation.

The enzyme catalyses alpha-D-glucosamine 1-phosphate = D-glucosamine 6-phosphate. Catalyzes the conversion of glucosamine-6-phosphate to glucosamine-1-phosphate. The protein is Phosphoglucosamine mutase of Parafrankia sp. (strain EAN1pec).